The following is a 426-amino-acid chain: Dihydroorotase (426 aa).

Zn(2+) contacts are provided by His58 and His60. Substrate is bound by residues 60-62 (HLR) and Asn92. Zn(2+)-binding residues include Asp150, His177, and His230. Asn276 lines the substrate pocket. Residue Asp303 coordinates Zn(2+). Asp303 is an active-site residue. Substrate contacts are provided by residues His307 and 321–322 (FG).

The protein belongs to the metallo-dependent hydrolases superfamily. DHOase family. Class I DHOase subfamily. Zn(2+) serves as cofactor.

The enzyme catalyses (S)-dihydroorotate + H2O = N-carbamoyl-L-aspartate + H(+). It functions in the pathway pyrimidine metabolism; UMP biosynthesis via de novo pathway; (S)-dihydroorotate from bicarbonate: step 3/3. Functionally, catalyzes the reversible cyclization of carbamoyl aspartate to dihydroorotate. In Listeria innocua serovar 6a (strain ATCC BAA-680 / CLIP 11262), this protein is Dihydroorotase.